The primary structure comprises 230 residues: Protein CbbY (230 aa).

Aspartate 8 serves as the catalytic Nucleophile. The Mg(2+) site is built by aspartate 8 and aspartate 10. Position 8 (aspartate 8) interacts with substrate. Residue aspartate 10 is the Proton donor of the active site. Substrate-binding positions include glutamate 17, 50 to 54, 75 to 78, and 115 to 121; these read GGKER, HRAK, and TTTSLPN. Aspartate 176 contacts Mg(2+).

Belongs to the HAD-like hydrolase superfamily. CbbY/CbbZ/Gph/YieH family. Mg(2+) is required as a cofactor.

The catalysed reaction is D-xylulose 1,5-bisphosphate + H2O = D-xylulose 5-phosphate + phosphate. Highly selective xylulose-1,5-bisphosphate (XuBP) phosphatase. Also shows activity towards ribulose-1,5-bisphosphate (RuBP) and fructose-1,6-bisphosphate (FBP), but not towards fructose-6-phosphate (F6P) or ribulose-5-phosphate (Ru5P). Degrades xylulose-1,5-bisphosphate, a potent inhibitor of rubisco produced by the rubisco itself. In Cereibacter sphaeroides (Rhodobacter sphaeroides), this protein is Protein CbbY.